A 394-amino-acid polypeptide reads, in one-letter code: Alpha-2B adrenergic receptor (394 aa).

A helical membrane pass occupies residues 1–25 (AIAAVITFLILFTIFGNALVILAVL). Topologically, residues 26–36 (TSRSLRAPQNL) are cytoplasmic. The helical transmembrane segment at 37–62 (FLVSLAAADILVATLIIPFSLANELL) threads the bilayer. Residues 63-72 (GYWYFRRTWC) are Extracellular-facing. A disulfide bridge connects residues Cys72 and Cys151. A helical membrane pass occupies residues 73 to 95 (EVYLALDVLFCTSSIVHLCAISL). At 96–117 (DRYWAVSRALEYNCKRTPRRIK) the chain is on the cytoplasmic side. Residues 118–140 (CIILTVWLIAAAISLPPLIYKGD) traverse the membrane as a helical segment. The Extracellular portion of the chain corresponds to 141-156 (QGPQPHGAPQCKLNQE). The helical transmembrane segment at 157-180 (AWYILSSSLGSFFVPCLIMILVYL) threads the bilayer. The Cytoplasmic portion of the chain corresponds to 181 to 358 (RIYLIAKRSH…LSREKRFTFV (178 aa)). Residues 191–318 (RRGPRAKGGP…GSPPLQQPQG (128 aa)) form a disordered region. Positions 281–298 (LEEEAEEEEEEEEEEDEP) are enriched in acidic residues. The segment covering 299 to 312 (QAVPVSPASVGSPP) has biased composition (low complexity). Residues 359 to 382 (LAVVIGVFVLCWFPFFFSYSLSAI) form a helical membrane-spanning segment. The Extracellular portion of the chain corresponds to 383-391 (CPQQCRVPH). The helical transmembrane segment at 392-394 (GLF) threads the bilayer.

Belongs to the G-protein coupled receptor 1 family. Adrenergic receptor subfamily. ADRA2B sub-subfamily. As to quaternary structure, interacts with RAB26. Interacts with PPP1R9B. Interacts with GGA1, GGA2 and GGA3.

It is found in the cell membrane. In terms of biological role, alpha-2 adrenergic receptors mediate the catecholamine-induced inhibition of adenylate cyclase through the action of G proteins. The sequence is that of Alpha-2B adrenergic receptor (ADRA2B) from Oryctolagus cuniculus (Rabbit).